Reading from the N-terminus, the 525-residue chain is Chromosomal replication initiator protein DnaA (525 aa).

Residues 1–71 form a domain I, interacts with DnaA modulators region; sequence MNDFWQHCSA…ADLAREFWNT (71 aa). Residues 71–188 form a domain II region; the sequence is TPIEVQFVLD…AEADSMYERS (118 aa). The interval 160-181 is disordered; that stretch reads AAAGRRTWRPGPGAAPANGAEA. The segment covering 169-181 has biased composition (low complexity); it reads PGPGAAPANGAEA. The interval 189-405 is domain III, AAA+ region; that stretch reads KLNPVLTFDN…GALRKILAYS (217 aa). ATP is bound by residues Gly-233, Gly-235, Lys-236, and Thr-237. A domain IV, binds dsDNA region spans residues 406–525; that stretch reads KFHGREISIE…LHVLEQTLKG (120 aa).

Belongs to the DnaA family. Oligomerizes as a right-handed, spiral filament on DNA at oriC.

It localises to the cytoplasm. Functionally, plays an essential role in the initiation and regulation of chromosomal replication. ATP-DnaA binds to the origin of replication (oriC) to initiate formation of the DNA replication initiation complex once per cell cycle. Binds the DnaA box (a 9 base pair repeat at the origin) and separates the double-stranded (ds)DNA. Forms a right-handed helical filament on oriC DNA; dsDNA binds to the exterior of the filament while single-stranded (ss)DNA is stabiized in the filament's interior. The ATP-DnaA-oriC complex binds and stabilizes one strand of the AT-rich DNA unwinding element (DUE), permitting loading of DNA polymerase. After initiation quickly degrades to an ADP-DnaA complex that is not apt for DNA replication. Binds acidic phospholipids. The polypeptide is Chromosomal replication initiator protein DnaA (Burkholderia vietnamiensis (strain G4 / LMG 22486) (Burkholderia cepacia (strain R1808))).